The primary structure comprises 116 residues: Spexin (116 aa).

Positions M1–S26 are cleaved as a signal peptide. The propeptide occupies A27–R35. Q49 carries the post-translational modification Glutamine amide. Propeptides lie at residues G50–W116 and P74–W116. Residues F53 to S73 show a composition bias toward basic and acidic residues. Residues F53–T80 are disordered.

The protein belongs to the spexin family.

The protein localises to the secreted. It localises to the extracellular space. The protein resides in the cytoplasmic vesicle. It is found in the secretory vesicle. Functionally, plays a role as a central modulator of cardiovascular and renal function and nociception. Also plays a role in energy metabolism and storage. Inhibits adrenocortical cell proliferation with minor stimulation on corticosteroid release. Its function is as follows. Acts as a ligand for galanin receptors GALR2 and GALR3. Intracerebroventricular administration of the peptide induces an increase in arterial blood pressure, a decrease in both heart rate and renal excretion and delayed natriuresis. Intraventricular administration of the peptide induces antinociceptive activity. Also induces contraction of muscarinic-like stomach smooth muscles. Intraperitoneal administration of the peptide induces a reduction in food consumption and body weight. Inhibits long chain fatty acid uptake into adipocytes. Intracerebroventricular administration of the peptide induces a decrease in heart rate, but no change in arterial pressure, and an increase in urine flow rate. Intraventricular administration of the peptide induces antinociceptive activity. The chain is Spexin (SPX) from Bos taurus (Bovine).